Here is a 156-residue protein sequence, read N- to C-terminus: 6,7-dimethyl-8-ribityllumazine synthase (156 aa).

Residues Phe23, 57 to 59 (AYE), and 81 to 83 (AVI) each bind 5-amino-6-(D-ribitylamino)uracil. 86–87 (ST) serves as a coordination point for (2S)-2-hydroxy-3-oxobutyl phosphate. His89 functions as the Proton donor in the catalytic mechanism. Phe114 contacts 5-amino-6-(D-ribitylamino)uracil. Residue Arg128 participates in (2S)-2-hydroxy-3-oxobutyl phosphate binding.

Belongs to the DMRL synthase family.

The catalysed reaction is (2S)-2-hydroxy-3-oxobutyl phosphate + 5-amino-6-(D-ribitylamino)uracil = 6,7-dimethyl-8-(1-D-ribityl)lumazine + phosphate + 2 H2O + H(+). Its pathway is cofactor biosynthesis; riboflavin biosynthesis; riboflavin from 2-hydroxy-3-oxobutyl phosphate and 5-amino-6-(D-ribitylamino)uracil: step 1/2. Catalyzes the formation of 6,7-dimethyl-8-ribityllumazine by condensation of 5-amino-6-(D-ribitylamino)uracil with 3,4-dihydroxy-2-butanone 4-phosphate. This is the penultimate step in the biosynthesis of riboflavin. The sequence is that of 6,7-dimethyl-8-ribityllumazine synthase from Helicobacter hepaticus (strain ATCC 51449 / 3B1).